Reading from the N-terminus, the 669-residue chain is DNA mismatch repair protein MutL (669 aa).

Disordered regions lie at residues 354–402 (NRPA…ENPY) and 448–479 (TVSHDSPPNRTAPDATTSSSKPRAPIESPLES). Residues 448–468 (TVSHDSPPNRTAPDATTSSSK) show a composition bias toward polar residues.

It belongs to the DNA mismatch repair MutL/HexB family.

In terms of biological role, this protein is involved in the repair of mismatches in DNA. It is required for dam-dependent methyl-directed DNA mismatch repair. May act as a 'molecular matchmaker', a protein that promotes the formation of a stable complex between two or more DNA-binding proteins in an ATP-dependent manner without itself being part of a final effector complex. The sequence is that of DNA mismatch repair protein MutL from Pectobacterium carotovorum subsp. carotovorum (strain PC1).